Consider the following 97-residue polypeptide: MPTILTQADIQQVLGELKGWAWERDALEKTYRFGSFREAMSFMVRAAFEAEALNHHPEWANVYDRVTVRLATHDAGGKVTAKDVELARRFEKISWVG.

Belongs to the pterin-4-alpha-carbinolamine dehydratase family.

The enzyme catalyses (4aS,6R)-4a-hydroxy-L-erythro-5,6,7,8-tetrahydrobiopterin = (6R)-L-erythro-6,7-dihydrobiopterin + H2O. This Opitutus terrae (strain DSM 11246 / JCM 15787 / PB90-1) protein is Putative pterin-4-alpha-carbinolamine dehydratase.